A 732-amino-acid chain; its full sequence is Probable boron transporter 3 (732 aa).

Residue methionine 1 is modified to N-acetylmethionine. Residues 1-37 (MDEAESFVPFQGIKKDVKGRLNCYKQDWISGLRAGFR) lie on the Cytoplasmic side of the membrane. The chain crosses the membrane as a helical span at residues 38-58 (ILAPTTYIFFASAIPVITFGE). Over 59–77 (QLERDTDGKITAVQTLVST) the chain is Extracellular. A helical membrane pass occupies residues 78 to 98 (ALCGVIHSIIGGQPLLILGVA). Residues 99–123 (EPTVIMYTFMFNFAKSRTDLGSNLF) lie on the Cytoplasmic side of the membrane. Residues 124-144 (LAWTGWVCLWTGLLLFLLAVL) traverse the membrane as a helical segment. The Extracellular portion of the chain corresponds to 145 to 157 (GACTFINRFTRLA). A helical membrane pass occupies residues 158-178 (GELFGILIAMLFMQEAIRGIV). Residues 179-197 (DEFGVPGRTNPRSAEFQPA) are Cytoplasmic-facing. The helical transmembrane segment at 198-218 (WVFANGMFGLVLSSGLLYTGL) threads the bilayer. At 219-234 (KSRKARSWRFGAEWLR) the chain is on the extracellular side. The helical transmembrane segment at 235–255 (GFIADYGVPVMVVVWTCISYI) threads the bilayer. The Cytoplasmic segment spans residues 256–291 (PWKSVPQGIPRRLVSPNPWSPGAYQNWTVIKEMVDV). The helical transmembrane segment at 292–312 (PVLYILLAVVPASMIAVLYYF) threads the bilayer. Residues 313 to 339 (DHSVASQLAQQEDFNLRKPPAYHYDLF) are Extracellular-facing. A helical transmembrane segment spans residues 340 to 360 (LLGFLTILCGLIGIPPSNGVI). The Cytoplasmic segment spans residues 361-463 (PQSPMHTKSL…ILPVEVKEQR (103 aa)). A helical transmembrane segment spans residues 464 to 484 (VSNFLQAMMVAGCVAAMPLIK). The Extracellular segment spans residues 485 to 556 (RIPSSVLWGY…LFQTAYLLVC (72 aa)). A helical membrane pass occupies residues 557–577 (FGITWVPVAGVLFPLMIMFLV). Residues 578-732 (PVRQYVLPNF…QRLSNLGKSV (155 aa)) lie on the Cytoplasmic side of the membrane. The tract at residues 695 to 732 (GGGEISPRSSAGRAPFSPRSATGGGGGEQRLSNLGKSV) is disordered.

It belongs to the anion exchanger (TC 2.A.31.3) family.

The protein resides in the membrane. In terms of biological role, probable boron transporter. Boron is essential for maintaining the integrity of plants cell walls. The protein is Probable boron transporter 3 (BOR3) of Arabidopsis thaliana (Mouse-ear cress).